The primary structure comprises 301 residues: Formamidopyrimidine-DNA glycosylase (301 aa).

Proline 2 (schiff-base intermediate with DNA) is an active-site residue. Glutamate 3 functions as the Proton donor in the catalytic mechanism. Lysine 58 acts as the Proton donor; for beta-elimination activity in catalysis. DNA contacts are provided by histidine 109, arginine 131, and lysine 174. The FPG-type zinc-finger motif lies at serine 265–lysine 301. Arginine 291 acts as the Proton donor; for delta-elimination activity in catalysis.

Belongs to the FPG family. In terms of assembly, monomer. Requires Zn(2+) as cofactor.

It carries out the reaction Hydrolysis of DNA containing ring-opened 7-methylguanine residues, releasing 2,6-diamino-4-hydroxy-5-(N-methyl)formamidopyrimidine.. The enzyme catalyses 2'-deoxyribonucleotide-(2'-deoxyribose 5'-phosphate)-2'-deoxyribonucleotide-DNA = a 3'-end 2'-deoxyribonucleotide-(2,3-dehydro-2,3-deoxyribose 5'-phosphate)-DNA + a 5'-end 5'-phospho-2'-deoxyribonucleoside-DNA + H(+). Its function is as follows. Involved in base excision repair of DNA damaged by oxidation or by mutagenic agents. Acts as a DNA glycosylase that recognizes and removes damaged bases. Has a preference for oxidized purines, such as 7,8-dihydro-8-oxoguanine (8-oxoG). Has AP (apurinic/apyrimidinic) lyase activity and introduces nicks in the DNA strand. Cleaves the DNA backbone by beta-delta elimination to generate a single-strand break at the site of the removed base with both 3'- and 5'-phosphates. The polypeptide is Formamidopyrimidine-DNA glycosylase (Rhizobium leguminosarum bv. trifolii (strain WSM2304)).